A 122-amino-acid chain; its full sequence is Large ribosomal subunit protein uL18 (122 aa).

The protein belongs to the universal ribosomal protein uL18 family. Part of the 50S ribosomal subunit; part of the 5S rRNA/L5/L18/L25 subcomplex. Contacts the 5S and 23S rRNAs.

Its function is as follows. This is one of the proteins that bind and probably mediate the attachment of the 5S RNA into the large ribosomal subunit, where it forms part of the central protuberance. In Mycobacterium avium (strain 104), this protein is Large ribosomal subunit protein uL18.